Consider the following 267-residue polypeptide: Myxobacterial hemagglutinin (267 aa).

Repeat copies occupy residues 1 to 66, 67 to 133, 134 to 200, and 201 to 267. The 4 X 65 AA tandem repeats stretch occupies residues 1 to 267; it reads MAAYLVQNQW…GPIGFRARLG (267 aa).

The protein belongs to the bacterial lectin family.

This lectin might have a role in the differentiation of cells. This chain is Myxobacterial hemagglutinin (mbhA), found in Myxococcus xanthus.